A 38-amino-acid chain; its full sequence is Photosystem II reaction center protein L (38 aa).

A helical membrane pass occupies residues Ser-17–Phe-37.

Belongs to the PsbL family. In terms of assembly, PSII is composed of 1 copy each of membrane proteins PsbA, PsbB, PsbC, PsbD, PsbE, PsbF, PsbH, PsbI, PsbJ, PsbK, PsbL, PsbM, PsbT, PsbX, PsbY, PsbZ, Psb30/Ycf12, at least 3 peripheral proteins of the oxygen-evolving complex and a large number of cofactors. It forms dimeric complexes.

The protein localises to the plastid. It localises to the chloroplast thylakoid membrane. In terms of biological role, one of the components of the core complex of photosystem II (PSII). PSII is a light-driven water:plastoquinone oxidoreductase that uses light energy to abstract electrons from H(2)O, generating O(2) and a proton gradient subsequently used for ATP formation. It consists of a core antenna complex that captures photons, and an electron transfer chain that converts photonic excitation into a charge separation. This subunit is found at the monomer-monomer interface and is required for correct PSII assembly and/or dimerization. The sequence is that of Photosystem II reaction center protein L from Pinus thunbergii (Japanese black pine).